The primary structure comprises 402 residues: Arginine deiminase (402 aa).

Cys392 serves as the catalytic Amidino-cysteine intermediate.

This sequence belongs to the arginine deiminase family.

It localises to the cytoplasm. The enzyme catalyses L-arginine + H2O = L-citrulline + NH4(+). Its pathway is amino-acid degradation; L-arginine degradation via ADI pathway; carbamoyl phosphate from L-arginine: step 1/2. In Mycolicibacterium gilvum (strain PYR-GCK) (Mycobacterium gilvum (strain PYR-GCK)), this protein is Arginine deiminase.